The chain runs to 218 residues: Transmembrane gamma-carboxyglutamic acid protein 1 (218 aa).

Positions 1–20 (MGRIFLTGEKANSVLKRYPR) are excised as a propeptide. A Gla domain is found at 20-66 (RANGLFEEIRQGNIERECKEEVCTFEEAREAFENNEKTKEFWNTYTK). Topologically, residues 21–80 (ANGLFEEIRQGNIERECKEEVCTFEEAREAFENNEKTKEFWNTYTKAQQGESNRGSDWFQ) are extracellular. Cys-37 and Cys-42 are disulfide-bonded. Residues 81 to 101 (FYLTFPLIFGLFIILLVIFLI) form a helical membrane-spanning segment. At 102-218 (WRCFLRNKTR…AMVPVATTIK (117 aa)) the chain is on the cytoplasmic side. Residues 160–192 (STRLSNCDPPPTYEEATGQMNLRRSETEPHLDP) form a disordered region. The segment covering 182-192 (RRSETEPHLDP) has biased composition (basic and acidic residues).

Post-translationally, gla residues are produced after subsequent post-translational modifications of glutamate by a vitamin K-dependent gamma-carboxylase.

The protein resides in the membrane. This chain is Transmembrane gamma-carboxyglutamic acid protein 1 (PRRG1), found in Bos taurus (Bovine).